The chain runs to 224 residues: Large ribosomal subunit protein bL25 (224 aa).

The disordered stretch occupies residues 195–224 (TVEEVDEAAEVDAADVPATEQGTDESKDGE). Acidic residues predominate over residues 197–207 (EEVDEAAEVDA).

This sequence belongs to the bacterial ribosomal protein bL25 family. CTC subfamily. Part of the 50S ribosomal subunit; part of the 5S rRNA/L5/L18/L25 subcomplex. Contacts the 5S rRNA. Binds to the 5S rRNA independently of L5 and L18.

In terms of biological role, this is one of the proteins that binds to the 5S RNA in the ribosome where it forms part of the central protuberance. This Psychrobacter cryohalolentis (strain ATCC BAA-1226 / DSM 17306 / VKM B-2378 / K5) protein is Large ribosomal subunit protein bL25.